The sequence spans 210 residues: Heart- and neural crest derivatives-expressed protein 2 (210 aa).

The interval 81–101 is disordered; it reads SGAGGLMQRPVKRRGTANRKE. A compositionally biased stretch (basic residues) spans 90 to 101; the sequence is PVKRRGTANRKE. One can recognise a bHLH domain in the interval 92–144; it reads KRRGTANRKERRRTISINSAFAELRECIPNVPADTKLSKIKTLRLATSYIAYL.

As to quaternary structure, efficient DNA binding requires dimerization with another bHLH protein. As to expression, heart, liver and spleen.

It is found in the nucleus. Its function is as follows. Essential for cardiac morphogenesis and for the development of branchial arches. Binds DNA on E-box consensus sequence 5'-CANNTG-3'. This is Heart- and neural crest derivatives-expressed protein 2 (hand2) from Xenopus laevis (African clawed frog).